Reading from the N-terminus, the 631-residue chain is DDB1- and CUL4-associated factor 8-like protein 2 (631 aa).

Disordered regions lie at residues 1 to 91 (MSHQ…EDFE) and 108 to 163 (EEET…HEQY). Polar residues predominate over residues 44 to 54 (SELSVTVTGDG). Composition is skewed to acidic residues over residues 77–88 (SASEDIELESLE) and 108–147 (EEET…EEEE). WD repeat units lie at residues 226 to 265 (DHVG…PVLN), 269 to 310 (GHTN…YFNN), 316 to 356 (QHRG…PASK), 364 to 404 (DKKV…KKEN), 420 to 459 (DFPT…GAQY), 467 to 507 (RNNT…IIQF), and 511 to 550 (SREG…ATEL). Residues 594-631 (QDWRSGEAEFPDEESDESSSTSETSEEEVQDRVQCMPS) are disordered.

Belongs to the WD repeat DCAF8 family.

In Homo sapiens (Human), this protein is DDB1- and CUL4-associated factor 8-like protein 2 (DCAF8L2).